We begin with the raw amino-acid sequence, 470 residues long: mRNA export factor ICP27 homolog (470 aa).

Disordered stretches follow at residues Met1–Asp31 and Phe73–Arg202. The span at Phe73–Pro85 shows a compositional bias: polar residues. Basic residues-rich tracts occupy residues His94–Asn107 and Arg178–Asn187. Zn(2+) contacts are provided by Cys359, His437, Cys441, and Cys446. The CHC2-type zinc-finger motif lies at Cys359 to Cys446.

The protein belongs to the HHV-1 ICP27 protein family. As to quaternary structure, homodimer. Homodimerization is required for transactivation. Associates in a complex with RNA, and host export factors NXF1/TAP and ALYREF; these interactions allow nuclear export of viral transcripts. Interacts with three host shuttling SR proteins SRSF1, SRSF3 and SRSF7. Interacts with host SRPK1. Interacts with IE62; this interaction enhances IE62 transactivation.

Its subcellular location is the host cytoplasm. The protein resides in the host nucleus. Functionally, multifunctional regulator of the expression of viral genes that mediates nuclear export of viral intronless mRNAs. This immediate early (EI) protein promotes the nuclear export of viral intronless mRNAs by interacting with mRNAs and host NXF1/TAP. The chain is mRNA export factor ICP27 homolog from Equine herpesvirus 1 (strain Kentucky A) (EHV-1).